The chain runs to 274 residues: Large ribosomal subunit protein uL2 (274 aa).

The tract at residues 223 to 274 (VAMNPVDHPHGGGEGRTSGGRHPVTPWGVPTKGYKTRSNKRTDKYIVRRRNK) is disordered.

The protein belongs to the universal ribosomal protein uL2 family. In terms of assembly, part of the 50S ribosomal subunit. Forms a bridge to the 30S subunit in the 70S ribosome.

Its function is as follows. One of the primary rRNA binding proteins. Required for association of the 30S and 50S subunits to form the 70S ribosome, for tRNA binding and peptide bond formation. It has been suggested to have peptidyltransferase activity; this is somewhat controversial. Makes several contacts with the 16S rRNA in the 70S ribosome. This is Large ribosomal subunit protein uL2 from Shewanella sp. (strain ANA-3).